Reading from the N-terminus, the 401-residue chain is MKILVINCGSSSLKYQLIDMTSEQPIAQGLVERIGIEGSVLTHKVNGKKYKIEEEMKDHKKAIELVLNALVNEEYGVIKNMEEISAVGHRVVHGGEKYAESVLIDSEVMEALEDFVKLAPLHNPPNIIGINACKELMSSTPMVAVFDTAFHQTLPDYAYMYSLPYDLYEKHGIRKYGFHGTSHKYVSAMAAKVLGKNIEDLKLITCHLGNGSSLAAVKNGKCVDTSMGFTPLAGLTMGTRCGDIDPAIVTFLIKELNYSVDEVNKIMNKESGVLGISGISSDFRDILKAASEGNERAELALNIFKNKVIQYIGAYTAVMGGVDAIIFTAGVGENSEPIRKRIISDLGFLGIKLDEEKNKVMGETETISTEDSKVKVLAIPTNEELMIARDTKEIVEKNNIK.

A Mg(2+)-binding site is contributed by Asn7. Residue Lys14 coordinates ATP. Arg90 serves as a coordination point for substrate. Asp147 functions as the Proton donor/acceptor in the catalytic mechanism. Residues 207 to 211 (HLGNG), 282 to 284 (DFR), and 330 to 334 (GVGEN) each bind ATP. Mg(2+) is bound at residue Glu383.

The protein belongs to the acetokinase family. As to quaternary structure, homodimer. Mg(2+) serves as cofactor. Mn(2+) is required as a cofactor.

It is found in the cytoplasm. It carries out the reaction acetate + ATP = acetyl phosphate + ADP. Its pathway is metabolic intermediate biosynthesis; acetyl-CoA biosynthesis; acetyl-CoA from acetate: step 1/2. In terms of biological role, catalyzes the formation of acetyl phosphate from acetate and ATP. Can also catalyze the reverse reaction. This chain is Acetate kinase, found in Clostridium novyi (strain NT).